The primary structure comprises 187 residues: ATP synthase subunit b 2 (187 aa).

The interval 1–25 is disordered; sequence MAESHGGAKGPAAGAHTGAEGGHGG. Residues 39-59 form a helical membrane-spanning segment; the sequence is LVSLAIFFVVLYVIVSKLALP. Positions 103–122 are disordered; it reads RAQAIGNESRDKANAQAETE. Over residues 110 to 122 the composition is skewed to basic and acidic residues; it reads ESRDKANAQAETE.

It belongs to the ATPase B chain family. F-type ATPases have 2 components, F(1) - the catalytic core - and F(0) - the membrane proton channel. F(1) has five subunits: alpha(3), beta(3), gamma(1), delta(1), epsilon(1). F(0) has three main subunits: a(1), b(2) and c(10-14). The alpha and beta chains form an alternating ring which encloses part of the gamma chain. F(1) is attached to F(0) by a central stalk formed by the gamma and epsilon chains, while a peripheral stalk is formed by the delta and b chains.

It localises to the cell inner membrane. F(1)F(0) ATP synthase produces ATP from ADP in the presence of a proton or sodium gradient. F-type ATPases consist of two structural domains, F(1) containing the extramembraneous catalytic core and F(0) containing the membrane proton channel, linked together by a central stalk and a peripheral stalk. During catalysis, ATP synthesis in the catalytic domain of F(1) is coupled via a rotary mechanism of the central stalk subunits to proton translocation. Its function is as follows. Component of the F(0) channel, it forms part of the peripheral stalk, linking F(1) to F(0). The b'-subunit is a diverged and duplicated form of b found in plants and photosynthetic bacteria. This chain is ATP synthase subunit b 2 (atpF2), found in Bradyrhizobium diazoefficiens (strain JCM 10833 / BCRC 13528 / IAM 13628 / NBRC 14792 / USDA 110).